The following is a 486-amino-acid chain: Monocarboxylate transporter 12 (486 aa).

At 1 to 9 the chain is on the cytoplasmic side; the sequence is MTKITRVGS. A run of 6 helical transmembrane segments spans residues 10–30, 58–78, 86–106, 115–135, 148–168, and 177–197; these read ASPP…LVTI, AWIH…GSVV, AGIM…SFAT, LGVL…AMVG, IAMS…QLLI, and LLIL…MRPI. Residues 201–220 show a composition bias toward basic and acidic residues; it reads EDPSGPEKSHDRDAQREDCK. Positions 201–221 are disordered; the sequence is EDPSGPEKSHDRDAQREDCKQ. 6 helical membrane-spanning segments follow: residues 253 to 273, 289 to 309, 320 to 340, 353 to 373, 383 to 403, and 410 to 430; these read FVVL…LFVY, AFLM…FGWL, YVCY…LPML, FGYF…EIVG, VVYF…GWLV, and TAAF…LGFA. The Cytoplasmic portion of the chain corresponds to 431–486; the sequence is KIAKRMKRTQVPFLVKDSDPKLHLWTNGSVAYSIAKELDQKDEESLAKARTGCNLT.

It belongs to the major facilitator superfamily. Monocarboxylate porter (TC 2.A.1.13) family. Interacts with isoform 2 of BSG; this interaction is required for its localization to the plasma membrane. Detected in kidney, choroid plexus, testis, lung, stomach, large and small intestine, spleen, fat and parotid gland. In eye, expressed in cornea, ciliary epithelium, lens epithelium and lens fiber.

The protein localises to the cell membrane. It localises to the basolateral cell membrane. It carries out the reaction creatine(in) = creatine(out). It catalyses the reaction guanidinoacetate(in) = guanidinoacetate(out). Creatine uptake is inhibited by carbonyl cyanide 3-chlorophenylhydrazone (CCCP) and by valinomycin. Its function is as follows. Functions as a transporter for creatine and as well for its precursor guanidinoacetate. Transport of creatine and GAA is independent of resting membrane potential and extracellular Na(+), Cl(-), or pH. Contributes to the process of creatine biosynthesis and distribution. The protein is Monocarboxylate transporter 12 of Rattus norvegicus (Rat).